The primary structure comprises 291 residues: Urease accessory protein UreD (291 aa).

This sequence belongs to the UreD family. In terms of assembly, ureD, UreF and UreG form a complex that acts as a GTP-hydrolysis-dependent molecular chaperone, activating the urease apoprotein by helping to assemble the nickel containing metallocenter of UreC. The UreE protein probably delivers the nickel.

It is found in the cytoplasm. Functionally, required for maturation of urease via the functional incorporation of the urease nickel metallocenter. The sequence is that of Urease accessory protein UreD from Acinetobacter baumannii (strain ACICU).